The sequence spans 255 residues: MRIDGRENKQLRPVHMEKHFIKHAEGSVFITVGDTKVICTASIDDKVPPFMRGGGKGWITAEYAMLPRATEQRNVRESSKGKLSGRTMEIQRLIGRALRSVVNLDKLGEKTVWIDCDVIQADGGTRTASITGAYVAMVLAFAKLMEEKKLDELPVNDFLAATSVGIDPEHGIILDLNYAEDARAEVDMNIVMTGAGRFVEIQGTGEEATFSREQLNELLDTAEVGIRQLIDIQRKTLGELAMQIDIKRSEESGDT.

Phosphate contacts are provided by residues R86 and 124-126; that span reads GTR.

The protein belongs to the RNase PH family. In terms of assembly, homohexameric ring arranged as a trimer of dimers.

The catalysed reaction is tRNA(n+1) + phosphate = tRNA(n) + a ribonucleoside 5'-diphosphate. In terms of biological role, phosphorolytic 3'-5' exoribonuclease that plays an important role in tRNA 3'-end maturation. Removes nucleotide residues following the 3'-CCA terminus of tRNAs; can also add nucleotides to the ends of RNA molecules by using nucleoside diphosphates as substrates, but this may not be physiologically important. Probably plays a role in initiation of 16S rRNA degradation (leading to ribosome degradation) during starvation. This chain is Ribonuclease PH, found in Geobacillus sp. (strain WCH70).